The sequence spans 954 residues: Endoplasmic reticulum aminopeptidase 2 (954 aa).

The Cytoplasmic segment spans residues 1 to 7; that stretch reads MANSCRK. A helical; Signal-anchor for type II membrane protein transmembrane segment spans residues 8–28; that stretch reads LIFNIYVVFYCSAVIMPQICI. The Lumenal portion of the chain corresponds to 29–954; that stretch reads CSQFTSSPID…TLRKWLLTSI (926 aa). Asparagine 79 and asparagine 113 each carry an N-linked (GlcNAc...) asparagine glycan. Residues glutamate 194 and 328 to 332 contribute to the substrate site; that span reads GAMEN. Residue histidine 364 participates in Zn(2+) binding. Catalysis depends on glutamate 365, which acts as the Proton acceptor. Positions 368 and 387 each coordinate Zn(2+). N-linked (GlcNAc...) asparagine glycosylation is present at asparagine 399. Residues cysteine 415 and cysteine 454 are joined by a disulfide bond. N-linked (GlcNAc...) asparagine glycosylation is present at asparagine 644. An intrachain disulfide couples cysteine 753 to cysteine 760.

This sequence belongs to the peptidase M1 family. As to quaternary structure, heterodimer with ERAP1. Requires Zn(2+) as cofactor. N-glycosylated.

Its subcellular location is the endoplasmic reticulum membrane. Functionally, aminopeptidase that plays a central role in peptide trimming, a step required for the generation of most HLA class I-binding peptides. Peptide trimming is essential to customize longer precursor peptides to fit them to the correct length required for presentation on MHC class I molecules. Preferentially hydrolyzes the basic residues Arg and Lys. The protein is Endoplasmic reticulum aminopeptidase 2 (ERAP2) of Bos taurus (Bovine).